The chain runs to 76 residues: Kappa-actitoxin-Avd4o (76 aa).

The signal sequence occupies residues 1 to 19; sequence MNKALFLSLVVLCAAVVFA. Residues 20 to 33 constitute a propeptide that is removed on maturation; that stretch reads AEDLQKAKHAPFKL. 3 disulfides stabilise this stretch: C37-C72, C39-C65, and C55-C73.

It belongs to the sea anemone type 3 (BDS) potassium channel toxin family. In terms of tissue distribution, experimental results show no expression in the ectodermal tissue from the distal and proximal tentacles, body wall, and oral disk. Since paralogs are expressed in this tissue, an expression of this toxin in this tissue is probable. The negative results could be explained by the very low abundance of EST sequences.

The protein localises to the secreted. It localises to the nematocyst. Blocks Kv3 voltage-gated potassium channels. Reduces blood pressure. This is Kappa-actitoxin-Avd4o from Anemonia viridis (Snakelocks anemone).